A 107-amino-acid polypeptide reads, in one-letter code: Essential MCU regulator, mitochondrial (107 aa).

The N-terminal 47 residues, methionine 1–serine 47, are a transit peptide targeting the mitochondrion. Residues valine 48–phenylalanine 65 lie on the Mitochondrial matrix side of the membrane. The chain crosses the membrane as a helical span at residues glycine 66–serine 85. The short motif at glycine 81–serine 85 is the GXXXX[G/A/S] element. The Mitochondrial intermembrane segment spans residues lysine 86 to aspartate 107.

This sequence belongs to the SMDT1/EMRE family. As to quaternary structure, component of the uniplex complex, composed of MCU, EMRE/SMDT1, MICU1 and MICU2 (or MICU3) in a 4:4:1:1 stoichiometry. The number of EMRE/SMDT1 molecules is hovewer variable, ranging from 1 to 4 copies per uniplex complex, leading to uniplex complexes with distinct gatekeeping profiles. Interacts (via its C-terminal poly-Asp tail) with MCUR1; the interaction is direct. Unprocessed form interacts (via transit peptide) with MAIP1. In terms of processing, undergoes proteolytic degradation in neurons: degraded by AFG3L2 and SPG7 before SMDT1/EMRE assembly with the uniporter complex, limiting the availability of SMDT1/EMRE for MCU assembly and promoting efficient assembly of gatekeeper subunits with MCU.

The protein localises to the mitochondrion inner membrane. Essential regulatory subunit of the mitochondrial calcium uniporter complex (uniplex), a complex that mediates calcium uptake into mitochondria. Required to bridge the calcium-sensing proteins MICU1 with the calcium-conducting subunit MCU. Acts by mediating activation of MCU and retention of MICU1 to the MCU pore, in order to ensure tight regulation of the uniplex complex and appropriate responses to intracellular calcium signaling. The polypeptide is Essential MCU regulator, mitochondrial (Bos taurus (Bovine)).